A 78-amino-acid chain; its full sequence is Serine rich endogenous peptide 12 (78 aa).

An N-terminal signal peptide occupies residues 1-24; sequence MRNTISSKMGQVLIVLLLLCTVLC. Residues 25 to 43 constitute a propeptide, removed in mature form; the sequence is RTESALPSGQHSVLLTGRR. Residues 47–78 are disordered; sequence SGASGPVRSSQSSQAGGRFNDADPIAIDYGKY. The short motif at 50–64 is the SCOOP motif element; it reads SGPVRSSQSSQAGGR. The SxS motif essential for MIK2 binding motif lies at 56–58; the sequence is SQS.

It belongs to the serine rich endogenous peptide (SCOOP) phytocytokine family. Interacts with MIK2 (via extracellular leucine-rich repeat domain); this interaction triggers the formation of complex between MIK2 and the BAK1/SERK3 and SERK4 coreceptors, and subsequent BAK1 activation by phosphorylation on 'Ser-612'. As to expression, mostly expressed in the whole root system, and, to a lower extent, in seedlings shoots.

It localises to the cell membrane. Its subcellular location is the secreted. It is found in the extracellular space. The protein resides in the apoplast. Its function is as follows. Brassicaceae-specific phytocytokine (plant endogenous peptide released into the apoplast) perceived by MIK2 in a BAK1/SERK3 and SERK4 coreceptors-dependent manner, that modulates various physiological and antimicrobial processes including root growth prevention, phospholipid signaling pathway activation (e.g. accumulation of phosphatidic acid (PA), but transient reduction of phosphatidylinositol 4,5-bisphosphate (PIP(2)) levels) and reactive oxygen species (ROS) response regulation. Moderates primary root growth, and regulates root meristems and cell elongation; this root growth regulation is associated with the modulation of ROS metabolism and alteration of cell wall structure, and depends on variations in many genes expression. Promotes ROS (e.g. superoxide anion O(2) and hydrogen peroxide H(2)O(2)) production and MAPK (e.g. MPK3, MPK4 and MPK6) activation in a MIK2-dependent manner, thus leading to the up-regulation of immune-related marker genes (e.g. WRKY30, WRKY33 and CYP81F2). Involved in biotic and oxidative stress responses; acts as a negative regulator of defense against necrotrophic pathogens such as the bacteria Erwinia amylovora and the fungus Alternaria brassicicola. Able to prime defense responses against the pathogenic bacteria Pseudomonas syringae pv. tomato DC3000. Contributes to the triggering of defense responses toward generalist herbivores such as Spodoptera littoralis, probably via the activation of jasmonate and indole glucosinolate biosynthesis. Triggers the expression of several PROSCOOP genes (e.g. PROSCOOP3, PROSCOOP7, PROSCOOP12 and PROSCOOP13). The sequence is that of Serine rich endogenous peptide 12 from Arabidopsis thaliana (Mouse-ear cress).